We begin with the raw amino-acid sequence, 168 residues long: Photosystem I assembly protein Ycf3 (168 aa).

3 TPR repeats span residues 35-68 (AFTY…EIDP), 72-105 (SYIL…NPFL), and 120-153 (GEQA…TPGN).

Belongs to the Ycf3 family.

It is found in the plastid. Its subcellular location is the chloroplast thylakoid membrane. Functionally, essential for the assembly of the photosystem I (PSI) complex. May act as a chaperone-like factor to guide the assembly of the PSI subunits. In Ranunculus macranthus (Large buttercup), this protein is Photosystem I assembly protein Ycf3.